The sequence spans 502 residues: Zinc finger C3HC-type protein 1 (502 aa).

N-acetylalanine is present on alanine 2. Serine 24 bears the Phosphoserine mark. Threonine 28 carries the post-translational modification Phosphothreonine. The interval 36–73 is disordered; sequence IDEGIAPEEGGVDAKDTSATSQSVNGSPQAEQPSLEST. Residues 52–72 are compositionally biased toward polar residues; that stretch reads TSATSQSVNGSPQAEQPSLES. 2 positions are modified to phosphoserine: serine 58 and serine 62. Threonine 84 carries the phosphothreonine modification. Residues 102 to 156 form a C3HC-type zinc finger; the sequence is CAKYGWVTVECDMLKCSSCQAFLCASLQPAFDFDRYKQRCAELKKALCTAHEKFC. Positions 170–210 are F-box-like; it reads LPLDEPAILVSEFLDRFQSLCHLDLQLPSLRPEDLKTMCLT. The disordered stretch occupies residues 302 to 423; it reads SSPIPGLEGR…SSRSFFDPTS (122 aa). Phosphoserine is present on residues serine 321 and serine 329. The span at 327 to 338 shows a compositional bias: polar residues; that stretch reads TRSQDATFSPGS. Threonine 333 carries the phosphothreonine modification. A phosphoserine mark is found at serine 335, serine 338, serine 344, serine 354, serine 359, and serine 370. Residues 351-360 are compositionally biased toward polar residues; sequence RTRSWDSSSP. Residues 371–380 show a composition bias toward low complexity; the sequence is PTTRTRPVTR. Serine 381 carries the post-translational modification Phosphoserine. Threonine 384 and threonine 387 each carry phosphothreonine. At serine 395 the chain carries Phosphoserine. The Nuclear localization signal motif lies at 396–402; sequence PLRKAKR. Residues serine 407 and serine 483 each carry the phosphoserine modification. Residues 407–422 are compositionally biased toward low complexity; that stretch reads SSSSSDTSSRSFFDPT.

Interacts with TPR; this interaction mediates ZC3HC1 nuclear envelopes (NE)-association but also required for proper positioning of a substantial amount of TPR at the nuclear basket (NB). Phosphorylated. May also be weakly phosphorylated on Tyr residues. As to expression, widely expressed. Highly expressed in heart, skeletal muscle and testis. Expressed in brain, placenta, lung, kidney, liver, pancreas, spleen, thymus, prostate, ovary small intestine and colon. Weakly or not expressed in leukocytes.

Its subcellular location is the nucleus. The protein resides in the nucleus envelope. In terms of biological role, required for proper positioning of a substantial amount of TPR at the nuclear basket (NB) through interaction with TPR. The protein is Zinc finger C3HC-type protein 1 of Homo sapiens (Human).